The sequence spans 406 residues: Mitochondrial ribosome-associated GTPase 2 (406 aa).

The tract at residues 15 to 406 is localized in the mitochondria; the sequence is FEGVGHWALS…LGQGRQPLRW (392 aa). The segment at 30-406 is not localized in the mitochondria; sequence KPSRLLPQQA…LGQGRQPLRW (377 aa). Residues 70-224 enclose the Obg domain; the sequence is RYFVDYRRVL…RVLHLELKTV (155 aa). The OBG-type G domain maps to 225-390; sequence AHAGMVGFPN…LLLHLKVLYD (166 aa). Residues 231 to 238, 256 to 260, 278 to 281, 345 to 348, and 371 to 373 contribute to the GTP site; these read GFPNAGKS, FTTLK, DIPG, NKID, and SAL. Positions 238 and 258 each coordinate Mg(2+).

Belongs to the TRAFAC class OBG-HflX-like GTPase superfamily. OBG GTPase family. In terms of assembly, associates with the mitochondrial ribosome large subunit; the association occurs in a GTP-dependent manner. Mg(2+) serves as cofactor.

Its subcellular location is the mitochondrion. The protein resides in the mitochondrion inner membrane. Its function is as follows. Plays a role in the regulation of the mitochondrial ribosome assembly and of translational activity. Displays GTPase activity. Involved in the ribosome maturation process. This chain is Mitochondrial ribosome-associated GTPase 2 (MTG2), found in Pongo abelii (Sumatran orangutan).